A 336-amino-acid chain; its full sequence is HTH-type transcriptional repressor PurR (336 aa).

The 55-residue stretch at 2-56 (ATIKDVARLAGVSTTTVSHVINKTRFVAETTQEKVMEAVKQLNYAPSAVARSLKC) folds into the HTH lacI-type domain. The H-T-H motif DNA-binding region spans 4–23 (IKDVARLAGVSTTTVSHVIN). The DNA-binding element occupies 48–56 (SAVARSLKC). 4 residues coordinate hypoxanthine: phenylalanine 73, lysine 189, phenylalanine 220, and aspartate 274.

In terms of assembly, homodimer.

Its pathway is purine metabolism; purine nucleotide biosynthesis [regulation]. Is the main repressor of the genes involved in the de novo synthesis of purine nucleotides, regulating purB, purC, purEK, purF, purHD, purL, purMN and guaBA expression. PurR is allosterically activated to bind its cognate DNA by binding the purine corepressors, hypoxanthine or guanine, thereby effecting transcription repression. This Vibrio cholerae serotype O1 (strain ATCC 39315 / El Tor Inaba N16961) protein is HTH-type transcriptional repressor PurR.